A 459-amino-acid polypeptide reads, in one-letter code: LAS seventeen-binding protein 3 (459 aa).

Residues 219–403 (RPSNGGRGSF…APTSPSTSSP (185 aa)) are disordered. Ser227 carries the post-translational modification Phosphoserine. The span at 229–242 (DDDEDDYYDDDDYY) shows a compositional bias: acidic residues. The segment covering 243 to 262 (NDIPSSFSSTDASSTRPNTR) has biased composition (low complexity). Polar residues predominate over residues 289 to 300 (YSRNSRLAPTNS). Thr298 carries the phosphothreonine modification. Ser300 and Ser303 each carry phosphoserine. Acidic residues predominate over residues 340 to 350 (DEYDDYDDDYE). Residues 351–371 (SGYRRGNGRDRTKDREVDDLS) are compositionally biased toward basic and acidic residues. Residues 372 to 391 (NRFSKSRISSASTPQTSQGR) show a composition bias toward polar residues. Thr393 is subject to Phosphothreonine. Over residues 393–403 (TAPTSPSTSSP) the composition is skewed to low complexity. Ser397, Ser402, and Ser416 each carry phosphoserine. The SH3 domain maps to 400–459 (TSSPKAVALYSFAGEESGDLPFRKGDVITILKKSDSQNDWWTGRVNGREGIFPANYVELV).

Belongs to the SH3YL1 family. In terms of assembly, interacts with LAS17. In terms of processing, phosphorylation of Ser-397 is induced 2-fold in response to mating pheromone.

The protein localises to the cytoplasm. In Saccharomyces cerevisiae (strain YJM789) (Baker's yeast), this protein is LAS seventeen-binding protein 3 (LSB3).